A 559-amino-acid chain; its full sequence is Asparagine--tRNA ligase, cytoplasmic (559 aa).

Residue Ser72 is modified to Phosphoserine. An N6-acetyllysine mark is found at Lys255 and Lys501.

This sequence belongs to the class-II aminoacyl-tRNA synthetase family.

Its subcellular location is the cytoplasm. The catalysed reaction is tRNA(Asn) + L-asparagine + ATP = L-asparaginyl-tRNA(Asn) + AMP + diphosphate + H(+). The sequence is that of Asparagine--tRNA ligase, cytoplasmic (NARS) from Bos taurus (Bovine).